The following is a 426-amino-acid chain: Serine hydroxymethyltransferase (426 aa).

Residues Leu-115 and 119 to 121 (GHI) contribute to the (6S)-5,6,7,8-tetrahydrofolate site. Lys-225 is subject to N6-(pyridoxal phosphate)lysine.

This sequence belongs to the SHMT family. Homodimer. The cofactor is pyridoxal 5'-phosphate.

It localises to the cytoplasm. It functions in the pathway amino-acid biosynthesis; glycine biosynthesis; glycine from L-serine: step 1/1. Catalyzes the reversible interconversion of serine and glycine with a modified folate serving as the one-carbon carrier. Also exhibits a pteridine-independent aldolase activity toward beta-hydroxyamino acids, producing glycine and aldehydes, via a retro-aldol mechanism. This is Serine hydroxymethyltransferase from Thermoplasma acidophilum (strain ATCC 25905 / DSM 1728 / JCM 9062 / NBRC 15155 / AMRC-C165).